The following is a 354-amino-acid chain: UDP-3-O-acylglucosamine N-acyltransferase (354 aa).

The Proton acceptor role is filled by His257. A disordered region spans residues Ala335 to Asp354.

The protein belongs to the transferase hexapeptide repeat family. LpxD subfamily. As to quaternary structure, homotrimer.

It carries out the reaction a UDP-3-O-[(3R)-3-hydroxyacyl]-alpha-D-glucosamine + a (3R)-hydroxyacyl-[ACP] = a UDP-2-N,3-O-bis[(3R)-3-hydroxyacyl]-alpha-D-glucosamine + holo-[ACP] + H(+). Its pathway is bacterial outer membrane biogenesis; LPS lipid A biosynthesis. In terms of biological role, catalyzes the N-acylation of UDP-3-O-acylglucosamine using 3-hydroxyacyl-ACP as the acyl donor. Is involved in the biosynthesis of lipid A, a phosphorylated glycolipid that anchors the lipopolysaccharide to the outer membrane of the cell. The chain is UDP-3-O-acylglucosamine N-acyltransferase from Rhizobium etli (strain ATCC 51251 / DSM 11541 / JCM 21823 / NBRC 15573 / CFN 42).